Consider the following 201-residue polypeptide: 3-isopropylmalate dehydratase small subunit (201 aa).

The protein belongs to the LeuD family. LeuD type 1 subfamily. In terms of assembly, heterodimer of LeuC and LeuD.

The enzyme catalyses (2R,3S)-3-isopropylmalate = (2S)-2-isopropylmalate. It functions in the pathway amino-acid biosynthesis; L-leucine biosynthesis; L-leucine from 3-methyl-2-oxobutanoate: step 2/4. Catalyzes the isomerization between 2-isopropylmalate and 3-isopropylmalate, via the formation of 2-isopropylmaleate. In Sinorhizobium medicae (strain WSM419) (Ensifer medicae), this protein is 3-isopropylmalate dehydratase small subunit.